Consider the following 425-residue polypeptide: COBRA-like protein 4 (425 aa).

An N-terminal signal peptide occupies residues 1-27 (MAIGVGGCCAVLLAAALLFSSPATTYA). 5 N-linked (GlcNAc...) asparagine glycosylation sites follow: Asn36, Asn163, Asn171, Asn319, and Asn352.

It belongs to the COBRA family.

This Oryza sativa subsp. japonica (Rice) protein is COBRA-like protein 4 (BC1L9).